The following is a 262-amino-acid chain: 5'-nucleotidase SurE (262 aa).

Residues aspartate 11, aspartate 12, serine 43, and asparagine 101 each contribute to the a divalent metal cation site.

The protein belongs to the SurE nucleotidase family. It depends on a divalent metal cation as a cofactor.

Its subcellular location is the cytoplasm. It carries out the reaction a ribonucleoside 5'-phosphate + H2O = a ribonucleoside + phosphate. Its function is as follows. Nucleotidase that shows phosphatase activity on nucleoside 5'-monophosphates. In Prochlorococcus marinus (strain NATL1A), this protein is 5'-nucleotidase SurE.